We begin with the raw amino-acid sequence, 238 residues long: UPF0328 protein ECU07_0010 (238 aa).

Disordered stretches follow at residues 1 to 154 (MAAP…NTQR) and 211 to 238 (GRLH…LATL). Over residues 106 to 128 (HTEGCHTHEANPEPNTKHTETES) the composition is skewed to basic and acidic residues. Positions 129–152 (PKPQTSTQHHTPITIPSSLLSQNT) are enriched in polar residues.

This sequence belongs to the UPF0328 family.

The sequence is that of UPF0328 protein ECU07_0010 from Encephalitozoon cuniculi (strain GB-M1) (Microsporidian parasite).